Here is a 208-residue protein sequence, read N- to C-terminus: N-(5'-phosphoribosyl)anthranilate isomerase (208 aa).

Belongs to the TrpF family.

The enzyme catalyses N-(5-phospho-beta-D-ribosyl)anthranilate = 1-(2-carboxyphenylamino)-1-deoxy-D-ribulose 5-phosphate. The protein operates within amino-acid biosynthesis; L-tryptophan biosynthesis; L-tryptophan from chorismate: step 3/5. The polypeptide is N-(5'-phosphoribosyl)anthranilate isomerase (Natronomonas pharaonis (strain ATCC 35678 / DSM 2160 / CIP 103997 / JCM 8858 / NBRC 14720 / NCIMB 2260 / Gabara) (Halobacterium pharaonis)).